The chain runs to 451 residues: uncharacterized protein (451 aa).

The TRAM domain maps to 1–59 (MLKKNDIVEVEISDLSHDGAGIAKVDGLVFFVDNALPTEKIRMRVLKVKKNIAFGKVES). S-adenosyl-L-methionine-binding residues include glutamine 283, tyrosine 312, glutamate 333, and aspartate 381. The active-site Nucleophile is the cysteine 408.

Belongs to the class I-like SAM-binding methyltransferase superfamily. RNA M5U methyltransferase family.

This is an uncharacterized protein from Streptococcus mutans serotype c (strain ATCC 700610 / UA159).